Reading from the N-terminus, the 95-residue chain is Large ribosomal subunit protein bL28 (95 aa).

The protein belongs to the bacterial ribosomal protein bL28 family.

The protein is Large ribosomal subunit protein bL28 of Zymomonas mobilis subsp. mobilis (strain ATCC 31821 / ZM4 / CP4).